The primary structure comprises 122 residues: Probable transcription factor PqrA (122 aa).

Positions 7–107 (NDILKWLETQ…NTTPAKFREN (101 aa)) constitute an HTH araC/xylS-type domain. 2 consecutive DNA-binding regions (H-T-H motif) follow at residues 26–47 (DTIANKSGYSKWHLQRIFKDFK) and 74–97 (ILDIALMYGFSSQATFTRIFKKHF).

Its function is as follows. Upon expression in E.coli strain KY2563 confers resistance to antibiotics ofloxacin, ciprofloxacin, tetracycline, chloramphenicol, and ceftazidime (increases minimal inhibitory concentration by 8-32 times); also decreases expression of OmpF. In Proteus vulgaris, this protein is Probable transcription factor PqrA.